The primary structure comprises 463 residues: Bifunctional protein HldE (463 aa).

The segment at 1 to 315 (MKKILVIGDL…LILNQTHPKI (315 aa)) is ribokinase. 191–194 (NRAE) lines the ATP pocket. Asp-260 is a catalytic residue. A cytidylyltransferase region spans residues 334–463 (FTNGCFDILH…IEKIKRTHND (130 aa)).

In the N-terminal section; belongs to the carbohydrate kinase PfkB family. The protein in the C-terminal section; belongs to the cytidylyltransferase family. As to quaternary structure, homodimer.

It catalyses the reaction D-glycero-beta-D-manno-heptose 7-phosphate + ATP = D-glycero-beta-D-manno-heptose 1,7-bisphosphate + ADP + H(+). The enzyme catalyses D-glycero-beta-D-manno-heptose 1-phosphate + ATP + H(+) = ADP-D-glycero-beta-D-manno-heptose + diphosphate. It participates in nucleotide-sugar biosynthesis; ADP-L-glycero-beta-D-manno-heptose biosynthesis; ADP-L-glycero-beta-D-manno-heptose from D-glycero-beta-D-manno-heptose 7-phosphate: step 1/4. It functions in the pathway nucleotide-sugar biosynthesis; ADP-L-glycero-beta-D-manno-heptose biosynthesis; ADP-L-glycero-beta-D-manno-heptose from D-glycero-beta-D-manno-heptose 7-phosphate: step 3/4. The protein operates within bacterial outer membrane biogenesis; LPS core biosynthesis. Its function is as follows. Catalyzes the phosphorylation of D-glycero-D-manno-heptose 7-phosphate at the C-1 position to selectively form D-glycero-beta-D-manno-heptose-1,7-bisphosphate. Catalyzes the ADP transfer from ATP to D-glycero-beta-D-manno-heptose 1-phosphate, yielding ADP-D-glycero-beta-D-manno-heptose. The polypeptide is Bifunctional protein HldE (Helicobacter pylori (strain J99 / ATCC 700824) (Campylobacter pylori J99)).